Here is a 502-residue protein sequence, read N- to C-terminus: Protein IWS1 homolog 1 (502 aa).

The span at 1–12 (MGFEDDPYRDVD) shows a compositional bias: basic and acidic residues. 2 disordered regions span residues 1–61 (MGFE…DNDK) and 87–208 (DEDV…DEDE). Acidic residues-rich tracts occupy residues 13 to 22 (GEPIVDFDDF), 34 to 49 (QDFD…DWDG), and 87 to 97 (DEDVDDAEFDE). Basic and acidic residues-rich tracts occupy residues 138-151 (NRGE…DEMW) and 181-194 (PSER…DRSP). Y185 is subject to Phosphotyrosine. Residues 287–370 (TLLKNWLEPL…DKWSRPIFNK (84 aa)) enclose the TFIIS N-terminal domain. A disordered region spans residues 385–434 (VPYRRPPVKKPSNKATMESRDGDFDLEIRERKTGLTSGQSSRGDRQMTMR). Residues 401–417 (MESRDGDFDLEIRERKT) are compositionally biased toward basic and acidic residues.

Belongs to the IWS1 family. Interacts with BZR2/BES1 and SPT6 (via N-terminus). Interacts with ASHH2/SDG8.

The protein resides in the nucleus. Transcription factor involved in RNA polymerase II (RNAPII) transcription regulation. Involved in transcription elongation. May function at post-recruitment and elongation steps of transcription. May be recruited by BZR2/BES1 to target genes and promote their expression during transcription elongation process. Required for brassinosteroid (BR)-induced gene expression. Required the for regulation of numerous nitrogen-responsive genes in roots. Acts in roots to repress NRT2.1 transcription in response to high nitrogen supply. This repression is associated with an IWS1-dependent increase of trimethylation on 'Lys-27' H3K27me3 at the NRT2.1 locus. This Arabidopsis thaliana (Mouse-ear cress) protein is Protein IWS1 homolog 1.